A 539-amino-acid polypeptide reads, in one-letter code: T-complex protein 1 subunit zeta (539 aa).

This sequence belongs to the TCP-1 chaperonin family. In terms of assembly, heterooligomeric complex of about 850 to 900 kDa that forms two stacked rings, 12 to 16 nm in diameter.

The protein resides in the cytoplasm. Its function is as follows. Molecular chaperone; assists the folding of proteins upon ATP hydrolysis. Known to play a role, in vitro, in the folding of actin and tubulin. The polypeptide is T-complex protein 1 subunit zeta (cct-6) (Caenorhabditis elegans).